The chain runs to 232 residues: A-type ATP synthase subunit D (232 aa).

This sequence belongs to the V-ATPase D subunit family. Has multiple subunits with at least A(3), B(3), C, D, E, F, H, I and proteolipid K(x).

It localises to the cell membrane. Component of the A-type ATP synthase that produces ATP from ADP in the presence of a proton gradient across the membrane. In Methanopyrus kandleri (strain AV19 / DSM 6324 / JCM 9639 / NBRC 100938), this protein is A-type ATP synthase subunit D.